Here is a 73-residue protein sequence, read N- to C-terminus: Ocellatin-PT7 (73 aa).

The N-terminal stretch at 1–22 is a signal peptide; the sequence is MAFLKKSLFLVLFLGLVSLSIC. A propeptide spanning residues 23-39 is cleaved from the precursor; that stretch reads DEEKRQDEDDDDDDDEE.

In terms of tissue distribution, expressed by the skin glands.

The protein localises to the secreted. Functionally, has antibacterial activity against Gram-negative bacteria E.coli ATCC 25922 (MIC=60 uM) and S.choleraesuis ATCC 14028 (MIC=240 uM) and against Gram-positive bacterium S.aureus ATCC 29313 (MIC=240 uM). Shows no hemolytic activity and no cytotoxicity. This chain is Ocellatin-PT7, found in Leptodactylus pustulatus (Ceara white-lipped frog).